Reading from the N-terminus, the 214-residue chain is Pyridoxine/pyridoxamine 5'-phosphate oxidase (214 aa).

Residues arginine 8 to tyrosine 11 and lysine 67 each bind substrate. Residues arginine 62 to lysine 67, tyrosine 77 to threonine 78, lysine 84, and glutamine 106 each bind FMN. Substrate is bound by residues tyrosine 124, arginine 128, and serine 132. FMN contacts are provided by residues glutamine 141 to serine 142 and tryptophan 186. Residue arginine 192 to histidine 194 participates in substrate binding. Arginine 196 serves as a coordination point for FMN.

It belongs to the pyridoxamine 5'-phosphate oxidase family. In terms of assembly, homodimer. Requires FMN as cofactor.

It catalyses the reaction pyridoxamine 5'-phosphate + O2 + H2O = pyridoxal 5'-phosphate + H2O2 + NH4(+). It carries out the reaction pyridoxine 5'-phosphate + O2 = pyridoxal 5'-phosphate + H2O2. Its pathway is cofactor metabolism; pyridoxal 5'-phosphate salvage; pyridoxal 5'-phosphate from pyridoxamine 5'-phosphate: step 1/1. It functions in the pathway cofactor metabolism; pyridoxal 5'-phosphate salvage; pyridoxal 5'-phosphate from pyridoxine 5'-phosphate: step 1/1. Catalyzes the oxidation of either pyridoxine 5'-phosphate (PNP) or pyridoxamine 5'-phosphate (PMP) into pyridoxal 5'-phosphate (PLP). This is Pyridoxine/pyridoxamine 5'-phosphate oxidase from Flavobacterium johnsoniae (strain ATCC 17061 / DSM 2064 / JCM 8514 / BCRC 14874 / CCUG 350202 / NBRC 14942 / NCIMB 11054 / UW101) (Cytophaga johnsonae).